Reading from the N-terminus, the 529-residue chain is Pheophorbide a oxygenase, chloroplastic (529 aa).

Disordered stretches follow at residues 1 to 24 (MPVM…RRVP) and 46 to 72 (LRVA…TSSA). Residues 1 to 47 (MPVMAPTASLLLSPRPLPASRRVPSLPALSASGRLRLRRARADTRLR) constitute a chloroplast transit peptide. Positions 82-194 (WYPVSLVEDL…TLVSQGLLFV (113 aa)) constitute a Rieske domain. Cys-124, His-126, Cys-144, and His-147 together coordinate [2Fe-2S] cluster.

[2Fe-2S] cluster is required as a cofactor. As to expression, expressed in leaves. Expressed at low levels in roots, stems, panicles and seeds.

It localises to the plastid. Its subcellular location is the chloroplast. It carries out the reaction pheophorbide a + 2 reduced [2Fe-2S]-[ferredoxin] + O2 + 2 H(+) = red chlorophyll catabolite + 2 oxidized [2Fe-2S]-[ferredoxin]. It functions in the pathway porphyrin-containing compound metabolism; chlorophyll degradation. Catalyzes the key reaction of chlorophyll catabolism, porphyrin macrocycle cleavage of pheophorbide a (pheide a) to a primary fluorescent catabolite (pFCC). Works in a two-step reaction with red chlorophyll catabolite reductase (RCCR). Creates the intermediate RCC through the opening of the porphyrin macrocycle by the introduction of one atom of molecular oxygen at the alpha-methine bridge. Seems to be specific for pheide a. Belongs to the chlorophyll catabolic enzymes (CCEs). May play a role in senescence and response to wounding. This chain is Pheophorbide a oxygenase, chloroplastic, found in Oryza sativa subsp. japonica (Rice).